A 551-amino-acid polypeptide reads, in one-letter code: Probable malate:quinone oxidoreductase (551 aa).

A compositionally biased stretch (low complexity) spans 525 to 544 (QTAAAAPQAQPQLKPQPDAK). Residues 525 to 551 (QTAAAAPQAQPQLKPQPDAKPVADIAL) form a disordered region.

It belongs to the MQO family. It depends on FAD as a cofactor.

The enzyme catalyses (S)-malate + a quinone = a quinol + oxaloacetate. The protein operates within carbohydrate metabolism; tricarboxylic acid cycle; oxaloacetate from (S)-malate (quinone route): step 1/1. This chain is Probable malate:quinone oxidoreductase, found in Enterobacter sp. (strain 638).